Consider the following 315-residue polypeptide: Glucokinase-like protein CC_3167 (315 aa).

The protein belongs to the bacterial glucokinase family.

This chain is Glucokinase-like protein CC_3167, found in Caulobacter vibrioides (strain ATCC 19089 / CIP 103742 / CB 15) (Caulobacter crescentus).